The sequence spans 679 residues: Methionine--tRNA ligase (679 aa).

The short motif at 15–25 (PYANGSIHLGH) is the 'HIGH' region element. The Zn(2+) site is built by C146, C149, C159, and C162. The 'KMSKS' region signature appears at 332-336 (KMSKS). ATP is bound at residue K335. The 103-residue stretch at 577-679 (DFAKVDMRVA…AGALPGMPVK (103 aa)) folds into the tRNA-binding domain.

The protein belongs to the class-I aminoacyl-tRNA synthetase family. MetG type 1 subfamily. Homodimer. It depends on Zn(2+) as a cofactor.

It is found in the cytoplasm. The catalysed reaction is tRNA(Met) + L-methionine + ATP = L-methionyl-tRNA(Met) + AMP + diphosphate. Functionally, is required not only for elongation of protein synthesis but also for the initiation of all mRNA translation through initiator tRNA(fMet) aminoacylation. This Sodalis glossinidius (strain morsitans) protein is Methionine--tRNA ligase.